Reading from the N-terminus, the 241-residue chain is Tetrahydromethanopterin S-methyltransferase subunit A (241 aa).

The Cytoplasmic segment spans residues 1-220; sequence MANKREPAPG…AKWQAGYYNG (220 aa). Histidine 85 contributes to the 5-hydroxybenzimidazolylcob(I)amide binding site. The helical transmembrane segment at 221–241 threads the bilayer; sequence KIQGIATGLFLMLLIMGILMF.

Belongs to the MtrA family. As to quaternary structure, the complex is composed of 8 subunits; MtrA, MtrB, MtrC, MtrD, MtrE, MtrF, MtrG and MtrH. It depends on 5-hydroxybenzimidazolylcob(I)amide as a cofactor.

The protein resides in the cell membrane. It catalyses the reaction 5-methyl-5,6,7,8-tetrahydromethanopterin + coenzyme M + 2 Na(+)(in) = 5,6,7,8-tetrahydromethanopterin + methyl-coenzyme M + 2 Na(+)(out). It participates in one-carbon metabolism; methanogenesis from CO(2); methyl-coenzyme M from 5,10-methylene-5,6,7,8-tetrahydromethanopterin: step 2/2. In terms of biological role, part of a complex that catalyzes the formation of methyl-coenzyme M and tetrahydromethanopterin from coenzyme M and methyl-tetrahydromethanopterin. This is an energy-conserving, sodium-ion translocating step. The polypeptide is Tetrahydromethanopterin S-methyltransferase subunit A (Methanocaldococcus jannaschii (strain ATCC 43067 / DSM 2661 / JAL-1 / JCM 10045 / NBRC 100440) (Methanococcus jannaschii)).